Consider the following 510-residue polypeptide: NAD(P)H-quinone oxidoreductase subunit 2, chloroplastic (510 aa).

13 helical membrane-spanning segments follow: residues 26-46 (LFDG…ILLL), 57-77 (IPWL…ALLF), 99-119 (IFQV…VEYI), 124-144 (MAIT…MFLC), 149-169 (LITI…LSGY), 184-204 (LLMG…LYGL), 227-247 (PGIS…LSPA), 295-315 (WHLL…LIAI), 323-343 (MLAY…IVGD), 354-374 (YMLF…LFGL), 395-415 (ALSL…AGFF), 418-438 (LYLF…IALV), and 484-504 (MIVC…IIAI).

The protein belongs to the complex I subunit 2 family. NDH is composed of at least 16 different subunits, 5 of which are encoded in the nucleus.

It localises to the plastid. The protein localises to the chloroplast thylakoid membrane. It carries out the reaction a plastoquinone + NADH + (n+1) H(+)(in) = a plastoquinol + NAD(+) + n H(+)(out). It catalyses the reaction a plastoquinone + NADPH + (n+1) H(+)(in) = a plastoquinol + NADP(+) + n H(+)(out). In terms of biological role, NDH shuttles electrons from NAD(P)H:plastoquinone, via FMN and iron-sulfur (Fe-S) centers, to quinones in the photosynthetic chain and possibly in a chloroplast respiratory chain. The immediate electron acceptor for the enzyme in this species is believed to be plastoquinone. Couples the redox reaction to proton translocation, and thus conserves the redox energy in a proton gradient. The protein is NAD(P)H-quinone oxidoreductase subunit 2, chloroplastic of Trachelium caeruleum (Blue throatwort).